Consider the following 634-residue polypeptide: MDSTARGHAPLCRTSNQRGLGTRLNPYYQSTPHQPMVQSMSNPIGSYGEQGNAQIIGSSGQVLSTGPPPGLAPVQCNDFDSCYSSCDDISHPSLSRESSDPSKIDDDQTAPMIRYPAPEVVEFATKLGYSTEQLSHVLNTIGVDSRMDDVLSELVKMGLPGGKPENSGKSGSRNSPEPIMTSSASSSSASSSSSHRPIRQSVSIATSSPATSSSTPSKYNPDPSLRAVVVDGSNVAMLHGRKEVFSCAGLRECLNYFLERGHPEVLIFIPQYRREQPRSDSPITDQHILQEIERHIIYTPSRNVNGRRVVCHDDRYILRTAELKDAVIVSNDEYRDLTRENPAWRKIVEERLLMFTFVEDKFMPPDDPSGRHGPRIESFLSKVPVVSSNPLVCPYARKCTYGNKCKFYHPERANGQHMSVTERLMKENQQKKSLGAVKSMQYEMFKNKHAALSRTQSLNVVKQLTENMSQLPPTPESPMQMPRQHMQLQQANSAPWQQHTVVQRHGSSPLTPVNRQMNVYPDMYNMSQQQNHQVLPNQHGVIGGQRPPKMTTTVSQTHLFAPSTAVWGHSELSVGPVNTGSDESLAEVRSRVHFHLCNIFPHDFVESVMAANPEEVNAPVLCELIIRAQKEYRK.

3 disordered regions span residues 1–33, 90–113, and 156–223; these read MDST…STPH, SHPS…APMI, and KMGL…NPDP. Over residues 97-106 the composition is skewed to basic and acidic residues; the sequence is ESSDPSKIDD. Composition is skewed to low complexity over residues 182 to 194 and 201 to 217; these read SSAS…SSSS and SVSI…STPS. Positions 225-377 constitute an RNase NYN domain; that stretch reads LRAVVVDGSN…PSGRHGPRIE (153 aa). A Mg(2+)-binding site is contributed by Asp314. The C3H1-type zinc-finger motif lies at 387–412; that stretch reads SSNPLVCPYARKCTYGNKCKFYHPER.

It belongs to the ZC3H12 family. The cofactor is Mg(2+). In terms of tissue distribution, expressed in the intestinal cells adjacent to the pharynx.

The protein resides in the cytoplasm. Functionally, endonuclease which binds to the 3'UTR of target mRNAs and induces degradation of the transcript. Acts together with rle-1 to repress the expression of the transcription factor ets-4 by binding to the conserved ADE (alternate decay element) and RCE (REGE-1 cleavage element) stem loop structure in its 3'UTR, which controls the expression of genes in the IIS and TORC1 pathways, including those involved in lipid metabolism and autophagosome formation. May play a role in the clearance of apoptotic cell corpses. In Caenorhabditis elegans, this protein is Endoribonuclease rege-1.